Consider the following 529-residue polypeptide: Potassium voltage-gated channel subfamily A member 6 (529 aa).

The segment at 1-33 (MRSEKSLTLAAPGEVRGPEGEQQDAGDFPEAGG) is disordered. Topologically, residues 1-171 (MRSEKSLTLA…LLFEYPESSG (171 aa)) are cytoplasmic. At serine 3 the chain carries Phosphoserine. Residues 172-193 (PARGIAIVSVLVILISIVIFCL) form a helical membrane-spanning segment. The Extracellular segment spans residues 194-262 (ETLPQFRVDG…TLGGSFFTDP (69 aa)). Residues 210-220 (GVSRVSPVSRG) show a composition bias toward low complexity. The segment at 210–233 (GVSRVSPVSRGSQEEEEDEDDSYT) is disordered. A helical transmembrane segment spans residues 263–284 (FFLVETLCIVWFTFELLVRFSA). Cysteine 285 is lipidated: S-palmitoyl cysteine. Residues 285–295 (CPSKPAFFRNI) lie on the Cytoplasmic side of the membrane. The chain crosses the membrane as a helical span at residues 296–316 (MNIIDLVAIFPYFITLGTELV). At 317 to 337 (QQQEQQPASGGGGQNGQQAMS) the chain is on the extracellular side. A helical; Voltage-sensor transmembrane segment spans residues 338–358 (LAILRVIRLVRVFRIFKLSRH). Topologically, residues 359–373 (SKGLQILGKTLQASM) are cytoplasmic. Residues 360–373 (KGLQILGKTLQASM) are S4-S5 linker. A helical membrane pass occupies residues 374–395 (RELGLLIFFLFIGVILFSSAVY). Topologically, residues 396–409 (FAEADDDDSLFPSI) are extracellular. Residues 410–421 (PDAFWWAVVTMT) constitute an intramembrane region (helical). The short motif at 422-427 (TVGYGD) is the Selectivity filter element. An intramembrane segment occupies 422-429 (TVGYGDMY). Residues 430-436 (PMTVGGK) lie on the Extracellular side of the membrane. Residues 437–465 (IVGSLCAIAGVLTIALPVPVIVSNFNYFY) form a helical membrane-spanning segment. The Cytoplasmic portion of the chain corresponds to 466 to 529 (HRETEQEEQG…YAEKRMLTEV (64 aa)). The segment at 488 to 513 (DLRATDNGLGKPDFPEANRERRPSYL) is disordered. Positions 500–510 (DFPEANRERRP) are enriched in basic and acidic residues. Serine 511 carries the post-translational modification Phosphoserine; by PKA. Positions 527-529 (TEV) match the PDZ-binding motif.

Belongs to the potassium channel family. A (Shaker) (TC 1.A.1.2) subfamily. Kv1.6/KCNA6 sub-subfamily. As to quaternary structure, homotetramer and heterotetramer of potassium channel proteins. Interacts with KCNAB1 and KCNAB2.

It is found in the cell membrane. The catalysed reaction is K(+)(in) = K(+)(out). Its function is as follows. Voltage-gated potassium channel that mediates transmembrane potassium transport in excitable membranes. Forms tetrameric potassium-selective channels through which potassium ions pass in accordance with their electrochemical gradient. The channel alternates between opened and closed conformations in response to the voltage difference across the membrane. Can form functional homotetrameric channels and heterotetrameric channels that contain variable proportions of KCNA1, KCNA2, KCNA4, KCNA6, and possibly other family members as well; channel properties depend on the type of alpha subunits that are part of the channel. Channel properties are modulated by cytoplasmic beta subunits that regulate the subcellular location of the alpha subunits and promote rapid inactivation. Homotetrameric channels display rapid activation and slow inactivation. The chain is Potassium voltage-gated channel subfamily A member 6 (KCNA6) from Homo sapiens (Human).